A 140-amino-acid polypeptide reads, in one-letter code: Putative pre-16S rRNA nuclease (140 aa).

Belongs to the YqgF nuclease family.

Its subcellular location is the cytoplasm. Functionally, could be a nuclease involved in processing of the 5'-end of pre-16S rRNA. The protein is Putative pre-16S rRNA nuclease of Chlorobium chlorochromatii (strain CaD3).